Consider the following 213-residue polypeptide: Transcriptional regulatory protein CrdR (213 aa).

The 116-residue stretch at 4-119 (KIFLLEDDYL…ELEARIKRFF (116 aa)) folds into the Response regulatory domain. D53 carries the 4-aspartylphosphate modification. Residues 121 to 212 (DDPIEIMPNI…HKGVGYRFNP (92 aa)) constitute a DNA-binding region (ompR/PhoB-type).

Phosphorylated by CrdS.

Functionally, member of the two-component regulatory system CrdR/CrdS that induces the transcriptional induction of the copper resistance determinant CrdA. Upon phosphorylation by CrdS, functions as a transcriptional regulator by direct binding to promoter regions of target genes including the crdA promoter or nitric oxide-responsive gene promoters. The polypeptide is Transcriptional regulatory protein CrdR (Helicobacter pylori (strain ATCC 700392 / 26695) (Campylobacter pylori)).